We begin with the raw amino-acid sequence, 720 residues long: Inactive serine protease PAMR1 (720 aa).

A signal peptide spans 1–21; sequence MELGWWPQLGLAFLQLLLISS. Cystine bridges form between Cys-128/Cys-150, Cys-177/Cys-199, Cys-239/Cys-250, Cys-244/Cys-260, Cys-262/Cys-271, Cys-280/Cys-329, Cys-315/Cys-342, and Cys-414/Cys-442. The region spanning 128-236 is the CUB domain; the sequence is CGQVLRVPKG…DGFHAIFEEI (109 aa). Positions 235 to 272 constitute an EGF-like domain; it reads EITACSSSPCFHDGTCLLDSTGSYKCACLAGYTGKHCE. Sushi domains are found at residues 278–344 and 387–444; these read RNCS…ICIK and APTK…SCIP. The Peptidase S1 domain maps to 445 to 720; the sequence is ICGKTENVSA…FKDWIERNMK (276 aa). Asn-451 carries N-linked (GlcNAc...) asparagine glycosylation. 3 disulfide bridges follow: Cys-489–Cys-505, Cys-630–Cys-649, and Cys-661–Cys-697.

The protein belongs to the peptidase S1 family.

It localises to the secreted. Functionally, may play a role in regeneration of skeletal muscle. The protein is Inactive serine protease PAMR1 (PAMR1) of Bos taurus (Bovine).